The following is a 307-amino-acid chain: 4-hydroxy-3-methylbut-2-enyl diphosphate reductase (307 aa).

Position 13 (Cys13) interacts with [4Fe-4S] cluster. Residues His42 and His75 each coordinate (2E)-4-hydroxy-3-methylbut-2-enyl diphosphate. Positions 42 and 75 each coordinate dimethylallyl diphosphate. The isopentenyl diphosphate site is built by His42 and His75. Cys97 lines the [4Fe-4S] cluster pocket. His125 is a (2E)-4-hydroxy-3-methylbut-2-enyl diphosphate binding site. His125 serves as a coordination point for dimethylallyl diphosphate. His125 serves as a coordination point for isopentenyl diphosphate. Glu127 (proton donor) is an active-site residue. Residue Thr165 participates in (2E)-4-hydroxy-3-methylbut-2-enyl diphosphate binding. A [4Fe-4S] cluster-binding site is contributed by Cys195. 4 residues coordinate (2E)-4-hydroxy-3-methylbut-2-enyl diphosphate: Ser223, Ser224, Asn225, and Ser267. Dimethylallyl diphosphate-binding residues include Ser223, Ser224, Asn225, and Ser267. Ser223, Ser224, Asn225, and Ser267 together coordinate isopentenyl diphosphate.

It belongs to the IspH family. [4Fe-4S] cluster serves as cofactor.

It catalyses the reaction isopentenyl diphosphate + 2 oxidized [2Fe-2S]-[ferredoxin] + H2O = (2E)-4-hydroxy-3-methylbut-2-enyl diphosphate + 2 reduced [2Fe-2S]-[ferredoxin] + 2 H(+). The catalysed reaction is dimethylallyl diphosphate + 2 oxidized [2Fe-2S]-[ferredoxin] + H2O = (2E)-4-hydroxy-3-methylbut-2-enyl diphosphate + 2 reduced [2Fe-2S]-[ferredoxin] + 2 H(+). It participates in isoprenoid biosynthesis; dimethylallyl diphosphate biosynthesis; dimethylallyl diphosphate from (2E)-4-hydroxy-3-methylbutenyl diphosphate: step 1/1. The protein operates within isoprenoid biosynthesis; isopentenyl diphosphate biosynthesis via DXP pathway; isopentenyl diphosphate from 1-deoxy-D-xylulose 5-phosphate: step 6/6. Its function is as follows. Catalyzes the conversion of 1-hydroxy-2-methyl-2-(E)-butenyl 4-diphosphate (HMBPP) into a mixture of isopentenyl diphosphate (IPP) and dimethylallyl diphosphate (DMAPP). Acts in the terminal step of the DOXP/MEP pathway for isoprenoid precursor biosynthesis. In Chlamydia trachomatis serovar L2 (strain ATCC VR-902B / DSM 19102 / 434/Bu), this protein is 4-hydroxy-3-methylbut-2-enyl diphosphate reductase.